The following is a 397-amino-acid chain: Heterogeneous nuclear ribonucleoprotein K homolog (397 aa).

The segment at 1 to 41 (MMIKVGAAINGTDSPKAMKREHDNDDGDRTGRHKRPKTDGF) is disordered. Residues 16–30 (KAMKREHDNDDGDRT) show a composition bias toward basic and acidic residues. 2 KH domains span residues 49-111 (KFEV…LKDV) and 124-189 (PCEV…IEEV). The tract at residues 220 to 279 (GGFPGNMPAGGPPNNRGPAPQRGGQGPPGGPRSYGGAITQGGGQRSFEAGDFQQFRGGPG) is disordered. A compositionally biased stretch (low complexity) spans 224–241 (GNMPAGGPPNNRGPAPQR). Positions 316–379 (VTTAQVTIPS…QQIHSAQYLL (64 aa)) constitute a KH 3 domain.

Interacts with alg-1; the interaction is direct and may be strengthened through RNA-protein association. Expressed in gut, muscle, neuronal and hypodermal tissues. Highly expressed in the germline and oocytes.

Its subcellular location is the nucleus. The protein localises to the cytoplasm. Functionally, RNA-binding protein which functions together with alg-1, a component of the miRNA loading complex, to modulate the processing and activity of specific miRNAs such as miR-58 and let-7 to regulate gene expression at the post-transcriptional level during embryonic, hypodermal and neuronal development. Promotes the lsy-6-mediated repression of cog-1 in uterine cells. In embryos, may play a role in the DNA damage response. The chain is Heterogeneous nuclear ribonucleoprotein K homolog from Caenorhabditis elegans.